The sequence spans 292 residues: Undecaprenyl-diphosphatase 2 (292 aa).

5 helical membrane-spanning segments follow: residues 89 to 109 (WLVI…QDAI), 118 to 138 (LIAT…WYAS), 203 to 223 (FLLA…SIGG), 232 to 252 (PTIL…AWFL), and 263 to 283 (FVLY…GGAL).

This sequence belongs to the UppP family.

The protein resides in the cell membrane. It catalyses the reaction di-trans,octa-cis-undecaprenyl diphosphate + H2O = di-trans,octa-cis-undecaprenyl phosphate + phosphate + H(+). Functionally, catalyzes the dephosphorylation of undecaprenyl diphosphate (UPP). Confers resistance to bacitracin. The chain is Undecaprenyl-diphosphatase 2 from Frankia casuarinae (strain DSM 45818 / CECT 9043 / HFP020203 / CcI3).